A 216-amino-acid chain; its full sequence is Ribose-5-phosphate isomerase A (216 aa).

Residues 26–29, 79–82, and 92–95 contribute to the substrate site; these read TGST, DGAD, and KGGG. Residue glutamate 101 is the Proton acceptor of the active site. Lysine 119 is a binding site for substrate.

The protein belongs to the ribose 5-phosphate isomerase family. As to quaternary structure, homodimer.

The enzyme catalyses aldehydo-D-ribose 5-phosphate = D-ribulose 5-phosphate. It functions in the pathway carbohydrate degradation; pentose phosphate pathway; D-ribose 5-phosphate from D-ribulose 5-phosphate (non-oxidative stage): step 1/1. In terms of biological role, catalyzes the reversible conversion of ribose-5-phosphate to ribulose 5-phosphate. In Legionella pneumophila (strain Lens), this protein is Ribose-5-phosphate isomerase A.